Consider the following 122-residue polypeptide: Large ribosomal subunit protein bL12 (122 aa).

Belongs to the bacterial ribosomal protein bL12 family. In terms of assembly, homodimer. Part of the ribosomal stalk of the 50S ribosomal subunit. Forms a multimeric L10(L12)X complex, where L10 forms an elongated spine to which 2 to 4 L12 dimers bind in a sequential fashion. Binds GTP-bound translation factors.

Its function is as follows. Forms part of the ribosomal stalk which helps the ribosome interact with GTP-bound translation factors. Is thus essential for accurate translation. The polypeptide is Large ribosomal subunit protein bL12 (Cellvibrio japonicus (strain Ueda107) (Pseudomonas fluorescens subsp. cellulosa)).